Consider the following 478-residue polypeptide: Membrane-bound lytic murein transglycosylase F (478 aa).

An N-terminal signal peptide occupies residues 1–22 (MTRFLFAIILGLLLTACQQETV). The segment at 23–257 (EETEFVPHKL…HLNEKYFGHV (235 aa)) is non-LT domain. Residues 258–478 (KRFDYIDTRA…PGTLSPDKPK (221 aa)) form an LT domain region. Residue Glu302 is part of the active site. The interval 447–478 (KQQNSEEVAPSDLTAEETPVPAPGTLSPDKPK) is disordered.

It in the N-terminal section; belongs to the bacterial solute-binding protein 3 family. This sequence in the C-terminal section; belongs to the transglycosylase Slt family.

The protein resides in the cell outer membrane. The enzyme catalyses Exolytic cleavage of the (1-&gt;4)-beta-glycosidic linkage between N-acetylmuramic acid (MurNAc) and N-acetylglucosamine (GlcNAc) residues in peptidoglycan, from either the reducing or the non-reducing ends of the peptidoglycan chains, with concomitant formation of a 1,6-anhydrobond in the MurNAc residue.. Murein-degrading enzyme that degrades murein glycan strands and insoluble, high-molecular weight murein sacculi, with the concomitant formation of a 1,6-anhydromuramoyl product. Lytic transglycosylases (LTs) play an integral role in the metabolism of the peptidoglycan (PG) sacculus. Their lytic action creates space within the PG sacculus to allow for its expansion as well as for the insertion of various structures such as secretion systems and flagella. This is Membrane-bound lytic murein transglycosylase F from Shewanella oneidensis (strain ATCC 700550 / JCM 31522 / CIP 106686 / LMG 19005 / NCIMB 14063 / MR-1).